Reading from the N-terminus, the 1241-residue chain is Interphotoreceptor matrix proteoglycan 2 (1241 aa).

The signal sequence occupies residues 1–22; the sequence is MIMFPLFGKISLGILIFVLIEG. Residues 23–1099 are Extracellular-facing; the sequence is DFPSLTAQTY…KHCEEFVSEP (1077 aa). An N-linked (GlcNAc...) asparagine glycan is attached at asparagine 154. The segment at 180 to 223 is disordered; it reads ELSSPVPVGDTSTLGDTTLSVPHPEVDAYEGASESSLERPEESI. Positions 189-199 are enriched in polar residues; sequence DTSTLGDTTLS. O-linked (GalNAc...) threonine glycosylation is found at threonine 190 and threonine 192. Residues 239–353 enclose the SEA 1 domain; it reads GEQIAEFSIH…KPTVVYTISN (115 aa). Positions 259 to 267 are hyaluronan-binding motif involved in chondroitin sulfate A-binding; sequence QDSSSFHHQ. N-linked (GlcNAc...) asparagine glycosylation is found at asparagine 301, asparagine 320, and asparagine 370. 2 O-linked (GalNAc...) threonine glycosylation sites follow: threonine 544 and threonine 556. Residues 660 to 678 are compositionally biased toward basic and acidic residues; that stretch reads QISKHSKYEHDDRSTHFPE. Positions 660 to 684 are disordered; it reads QISKHSKYEHDDRSTHFPEEEPLSG. One can recognise an SEA 2 domain in the interval 897–1010; that stretch reads GALVVFFSLR…YSLDVESGDE (114 aa). N-linked (GlcNAc...) asparagine glycosylation is found at asparagine 942 and asparagine 956. EGF-like domains lie at 1010 to 1051 and 1052 to 1093; these read EANP…RPCQ and SLCD…KHCE. Disulfide bonds link cysteine 1014-cysteine 1025, cysteine 1019-cysteine 1036, cysteine 1038-cysteine 1050, cysteine 1054-cysteine 1067, cysteine 1061-cysteine 1077, and cysteine 1079-cysteine 1092. The hyaluronan-binding motif involved in chondroitin sulfate C-binding stretch occupies residues 1080–1088; sequence RVGENWWYR. The chain crosses the membrane as a helical span at residues 1100-1120; that stretch reads VIIGITIASVVGLLVIFSAII. Residues 1121-1241 lie on the Cytoplasmic side of the membrane; it reads YFFIRTLQAH…FVREQQVEEV (121 aa). The interval 1125-1133 is hyaluronan-binding motif involved in chondroitin sulfate A- and C-binding; sequence RTLQAHHDR. The segment at 1136 to 1145 is hyaluronan-binding motif involved in chondroitin sulfate C-binding; sequence RESPFSGSSR. The segment at 1210 to 1218 is hyaluronan-binding motif involved in chondroitin sulfate A- and C-binding motif; the sequence is REEIQERMR.

In terms of processing, highly glycosylated (N- and O-linked carbohydrates). Expressed in the retina (at protein level). Expressed by photoreceptors of the interphotoreceptor matrix (IPM) surrounding both rods and cones (at protein level). IPM occupies the subretinal space between the apices of the retinal pigment epithelium and the neural retina. Expressed in the pineal gland (at protein level).

The protein resides in the photoreceptor outer segment membrane. The protein localises to the photoreceptor inner segment membrane. Its subcellular location is the secreted. It is found in the extracellular space. It localises to the extracellular matrix. The protein resides in the interphotoreceptor matrix. Its function is as follows. Chondroitin sulfate- and hyaluronan-binding proteoglycan involved in the organization of interphotoreceptor matrix; may participate in the maturation and maintenance of the light-sensitive photoreceptor outer segment. Binds heparin. In Homo sapiens (Human), this protein is Interphotoreceptor matrix proteoglycan 2 (IMPG2).